Consider the following 499-residue polypeptide: Glycerol kinase (499 aa).

T13 provides a ligand contact to ADP. The ATP site is built by T13, T14, and S15. A sn-glycerol 3-phosphate-binding site is contributed by T13. R17 is an ADP binding site. The sn-glycerol 3-phosphate site is built by R83, E84, Y135, and D245. Residues R83, E84, Y135, D245, and Q246 each contribute to the glycerol site. ADP is bound by residues T267 and G310. Residues T267, G310, Q314, and G411 each coordinate ATP. ADP contacts are provided by G411 and N415.

Belongs to the FGGY kinase family.

It catalyses the reaction glycerol + ATP = sn-glycerol 3-phosphate + ADP + H(+). The protein operates within polyol metabolism; glycerol degradation via glycerol kinase pathway; sn-glycerol 3-phosphate from glycerol: step 1/1. Its activity is regulated as follows. Inhibited by fructose 1,6-bisphosphate (FBP). Its function is as follows. Key enzyme in the regulation of glycerol uptake and metabolism. Catalyzes the phosphorylation of glycerol to yield sn-glycerol 3-phosphate. The sequence is that of Glycerol kinase from Stenotrophomonas maltophilia (strain R551-3).